A 376-amino-acid polypeptide reads, in one-letter code: Biotin synthase (376 aa).

The region spanning 68-292 (NEVQISTLLS…IAVTRICCPS (225 aa)) is the Radical SAM core domain. [4Fe-4S] cluster is bound by residues C83, C87, and C90. [2Fe-2S] cluster is bound by residues C129, C160, C220, and R296.

It belongs to the radical SAM superfamily. Biotin synthase family. Homodimer. Requires [4Fe-4S] cluster as cofactor. [2Fe-2S] cluster is required as a cofactor.

The enzyme catalyses (4R,5S)-dethiobiotin + (sulfur carrier)-SH + 2 reduced [2Fe-2S]-[ferredoxin] + 2 S-adenosyl-L-methionine = (sulfur carrier)-H + biotin + 2 5'-deoxyadenosine + 2 L-methionine + 2 oxidized [2Fe-2S]-[ferredoxin]. The protein operates within cofactor biosynthesis; biotin biosynthesis; biotin from 7,8-diaminononanoate: step 2/2. In terms of biological role, catalyzes the conversion of dethiobiotin (DTB) to biotin by the insertion of a sulfur atom into dethiobiotin via a radical-based mechanism. The chain is Biotin synthase from Psychrobacter cryohalolentis (strain ATCC BAA-1226 / DSM 17306 / VKM B-2378 / K5).